Reading from the N-terminus, the 189-residue chain is Putative manganese efflux pump MntP (189 aa).

6 helical membrane-spanning segments follow: residues 6-26 (IFGI…AAGV), 39-59 (LAWH…YAGL), 71-91 (WIAF…SFDA), 106-126 (LVLL…SLSV), 131-151 (VWMP…GGLM), and 169-189 (VGAG…GVFY).

The protein belongs to the MntP (TC 9.B.29) family.

The protein resides in the cell inner membrane. Probably functions as a manganese efflux pump. In Desulfosudis oleivorans (strain DSM 6200 / JCM 39069 / Hxd3) (Desulfococcus oleovorans), this protein is Putative manganese efflux pump MntP.